We begin with the raw amino-acid sequence, 109 residues long: Small ribosomal subunit protein bS6 (109 aa).

It belongs to the bacterial ribosomal protein bS6 family.

In terms of biological role, binds together with bS18 to 16S ribosomal RNA. The protein is Small ribosomal subunit protein bS6 of Ehrlichia canis (strain Jake).